We begin with the raw amino-acid sequence, 226 residues long: Ribonuclease 3 (226 aa).

The RNase III domain maps to 6 to 128; it reads VNQLQKKLGY…LIGAIFLDSD (123 aa). Glutamate 41 is a Mg(2+) binding site. Residue aspartate 45 is part of the active site. Aspartate 114 and glutamate 117 together coordinate Mg(2+). Glutamate 117 is a catalytic residue. The 71-residue stretch at 155–225 folds into the DRBM domain; that stretch reads DPKTRLQEYL…AEQALIQLEL (71 aa).

This sequence belongs to the ribonuclease III family. In terms of assembly, homodimer. Requires Mg(2+) as cofactor.

The protein resides in the cytoplasm. It catalyses the reaction Endonucleolytic cleavage to 5'-phosphomonoester.. Digests double-stranded RNA. Involved in the processing of primary rRNA transcript to yield the immediate precursors to the large and small rRNAs (23S and 16S). Processes some mRNAs, and tRNAs when they are encoded in the rRNA operon. Processes pre-crRNA and tracrRNA of type II CRISPR loci if present in the organism. The protein is Ribonuclease 3 of Proteus mirabilis (strain HI4320).